Reading from the N-terminus, the 99-residue chain is Large ribosomal subunit protein bL21 (99 aa).

Belongs to the bacterial ribosomal protein bL21 family. Part of the 50S ribosomal subunit. Contacts protein L20.

Its function is as follows. This protein binds to 23S rRNA in the presence of protein L20. This is Large ribosomal subunit protein bL21 from Mycoplasmopsis pulmonis (strain UAB CTIP) (Mycoplasma pulmonis).